The sequence spans 171 residues: Cytochrome c oxidase subunit 4 isoform 2, mitochondrial (171 aa).

Residues 1-28 (MLPRAAWSLVLRKGGGGRRGMHSSEGTT) constitute a mitochondrion transit peptide. The tract at residues 13–32 (KGGGGRRGMHSSEGTTRGGG) is disordered. The Mitochondrial matrix segment spans residues 29–100 (RGGGKMSPYT…TFAEMNRRSN (72 aa)). The chain crosses the membrane as a helical span at residues 101 to 126 (EWKTVMGCVFFFIGFAALVIWWQRVY). Residues 127-171 (VFPPKPITLTDERKAQQLQRMLDMKVNPVQGLASRWDYEKKQWKK) are Mitochondrial intermembrane-facing.

It belongs to the cytochrome c oxidase IV family. As to quaternary structure, component of the cytochrome c oxidase (complex IV, CIV), a multisubunit enzyme composed of 14 subunits. The complex is composed of a catalytic core of 3 subunits MT-CO1, MT-CO2 and MT-CO3, encoded in the mitochondrial DNA, and 11 supernumerary subunits COX4I1 (or COX4I2), COX5A, COX5B, COX6A1 (or COX6A2), COX6B1 (or COX6B2), COX6C, COX7A2 (or COX7A1), COX7B, COX7C, COX8A and NDUFA4, which are encoded in the nuclear genome. The complex exists as a monomer or a dimer and forms supercomplexes (SCs) in the inner mitochondrial membrane with NADH-ubiquinone oxidoreductase (complex I, CI) and ubiquinol-cytochrome c oxidoreductase (cytochrome b-c1 complex, complex III, CIII), resulting in different assemblies (supercomplex SCI(1)III(2)IV(1) and megacomplex MCI(2)III(2)IV(2)). As to expression, highly expressed in lung.

The protein localises to the mitochondrion inner membrane. Its pathway is energy metabolism; oxidative phosphorylation. In terms of biological role, component of the cytochrome c oxidase, the last enzyme in the mitochondrial electron transport chain which drives oxidative phosphorylation. The respiratory chain contains 3 multisubunit complexes succinate dehydrogenase (complex II, CII), ubiquinol-cytochrome c oxidoreductase (cytochrome b-c1 complex, complex III, CIII) and cytochrome c oxidase (complex IV, CIV), that cooperate to transfer electrons derived from NADH and succinate to molecular oxygen, creating an electrochemical gradient over the inner membrane that drives transmembrane transport and the ATP synthase. Cytochrome c oxidase is the component of the respiratory chain that catalyzes the reduction of oxygen to water. Electrons originating from reduced cytochrome c in the intermembrane space (IMS) are transferred via the dinuclear copper A center (CU(A)) of subunit 2 and heme A of subunit 1 to the active site in subunit 1, a binuclear center (BNC) formed by heme A3 and copper B (CU(B)). The BNC reduces molecular oxygen to 2 water molecules using 4 electrons from cytochrome c in the IMS and 4 protons from the mitochondrial matrix. The polypeptide is Cytochrome c oxidase subunit 4 isoform 2, mitochondrial (Homo sapiens (Human)).